The chain runs to 169 residues: Required for excision 1-B domain-containing protein (169 aa).

This Mus musculus (Mouse) protein is Required for excision 1-B domain-containing protein.